We begin with the raw amino-acid sequence, 268 residues long: Ribosomal RNA small subunit methyltransferase A (268 aa).

6 residues coordinate S-adenosyl-L-methionine: Asn-10, Ile-12, Gly-37, Glu-58, Asp-83, and Asn-107.

It belongs to the class I-like SAM-binding methyltransferase superfamily. rRNA adenine N(6)-methyltransferase family. RsmA subfamily.

It localises to the cytoplasm. The enzyme catalyses adenosine(1518)/adenosine(1519) in 16S rRNA + 4 S-adenosyl-L-methionine = N(6)-dimethyladenosine(1518)/N(6)-dimethyladenosine(1519) in 16S rRNA + 4 S-adenosyl-L-homocysteine + 4 H(+). Functionally, specifically dimethylates two adjacent adenosines (A1518 and A1519) in the loop of a conserved hairpin near the 3'-end of 16S rRNA in the 30S particle. May play a critical role in biogenesis of 30S subunits. This Caldanaerobacter subterraneus subsp. tengcongensis (strain DSM 15242 / JCM 11007 / NBRC 100824 / MB4) (Thermoanaerobacter tengcongensis) protein is Ribosomal RNA small subunit methyltransferase A.